Here is a 207-residue protein sequence, read N- to C-terminus: Alpha-1-acid glycoprotein 2 (207 aa).

The N-terminal stretch at 1-18 (MALHMILVMVSLLPLLEA) is a signal peptide. Gln19 carries the pyrrolidone carboxylic acid modification. 5 N-linked (GlcNAc...) asparagine glycosylation sites follow: Asn25, Asn34, Asn76, Asn94, and Asn104. Cys91 and Cys184 form a disulfide bridge. Residues 188–207 (EKQQLELEKETKKDPEEGQA) form a disordered region.

This sequence belongs to the calycin superfamily. Lipocalin family. Expressed by the liver and secreted in plasma.

The protein resides in the secreted. In terms of biological role, functions as a transport protein in the blood stream. Binds various ligands in the interior of its beta-barrel domain. Appears to function in modulating the activity of the immune system during the acute-phase reaction. This chain is Alpha-1-acid glycoprotein 2 (Orm2), found in Mus musculus (Mouse).